A 103-amino-acid polypeptide reads, in one-letter code: Pyrimidine/purine nucleoside phosphorylase (103 aa).

The protein belongs to the nucleoside phosphorylase PpnP family.

The enzyme catalyses a purine D-ribonucleoside + phosphate = a purine nucleobase + alpha-D-ribose 1-phosphate. The catalysed reaction is adenosine + phosphate = alpha-D-ribose 1-phosphate + adenine. It catalyses the reaction cytidine + phosphate = cytosine + alpha-D-ribose 1-phosphate. It carries out the reaction guanosine + phosphate = alpha-D-ribose 1-phosphate + guanine. The enzyme catalyses inosine + phosphate = alpha-D-ribose 1-phosphate + hypoxanthine. The catalysed reaction is thymidine + phosphate = 2-deoxy-alpha-D-ribose 1-phosphate + thymine. It catalyses the reaction uridine + phosphate = alpha-D-ribose 1-phosphate + uracil. It carries out the reaction xanthosine + phosphate = alpha-D-ribose 1-phosphate + xanthine. Catalyzes the phosphorolysis of diverse nucleosides, yielding D-ribose 1-phosphate and the respective free bases. Can use uridine, adenosine, guanosine, cytidine, thymidine, inosine and xanthosine as substrates. Also catalyzes the reverse reactions. In Shewanella sp. (strain W3-18-1), this protein is Pyrimidine/purine nucleoside phosphorylase.